We begin with the raw amino-acid sequence, 128 residues long: Ribonuclease pancreatic (128 aa).

Positions 1–25 (KESSAKKFQRQHIDSSGSPSTNPNY) are disordered. Substrate-binding residues include K7 and R10. H12 serves as the catalytic Proton acceptor. Over residues 14–25 (DSSGSPSTNPNY) the composition is skewed to polar residues. Cystine bridges form between C26–C84, C40–C95, C58–C110, and C65–C72. N34 carries N-linked (GlcNAc...) asparagine glycosylation. Residues 41–45 (KPVNT), K66, and R85 each bind substrate. The Proton donor role is filled by H119.

Belongs to the pancreatic ribonuclease family. As to quaternary structure, monomer. Interacts with and forms tight 1:1 complexes with RNH1. Dimerization of two such complexes may occur. Interaction with RNH1 inhibits this protein. As to expression, pancreas.

The protein localises to the secreted. The enzyme catalyses an [RNA] containing cytidine + H2O = an [RNA]-3'-cytidine-3'-phosphate + a 5'-hydroxy-ribonucleotide-3'-[RNA].. It catalyses the reaction an [RNA] containing uridine + H2O = an [RNA]-3'-uridine-3'-phosphate + a 5'-hydroxy-ribonucleotide-3'-[RNA].. Functionally, endonuclease that catalyzes the cleavage of RNA on the 3' side of pyrimidine nucleotides. Acts on single-stranded and double-stranded RNA. The sequence is that of Ribonuclease pancreatic (RNASE1) from Proechimys guairae (Guaira spiny rat).